Consider the following 260-residue polypeptide: 2-oxo-tetronate isomerase (260 aa).

E143 serves as the catalytic Proton donor/acceptor. Mg(2+) contacts are provided by E143, D178, Q204, and E240. The active-site Proton donor/acceptor is E240.

Belongs to the hyi family. OtnI subfamily.

It catalyses the reaction 2-dehydro-L-erythronate = 3-dehydro-L-erythronate. The enzyme catalyses 2-dehydro-D-erythronate = 3-dehydro-D-erythronate. Its function is as follows. Catalyzes the isomerization of 2-oxo-tetronate to 3-oxo-tetronate. In Cupriavidus necator (strain ATCC 17699 / DSM 428 / KCTC 22496 / NCIMB 10442 / H16 / Stanier 337) (Ralstonia eutropha), this protein is 2-oxo-tetronate isomerase.